A 297-amino-acid chain; its full sequence is MPSYALLGATGATGSSVLRHLLYSGSSSDLTVNVLVRSKSKLLAAFPSLDKPRPSVTSSIPTIRIFEGDSTNPDVLCAVLQDASLVFMCVAQNGSPMGTTLVQNTAAALIEARRRQAQPRGELTVIQLRSASLNPVLAVQVPRFVHRVVCFCLAAGYADLRRACVLYEAAATEGLLQYVLVDPPTLHDARGTQTTGYRLIDTTDMKDKENQRQAICLSYADLGVAMCEIASRADELHGQGVGVTATGPVRQTWAVLAGFLLEGGLGHLDYRYGRENVVVLGVCILLLLGGLLYSIKA.

The chain crosses the membrane as a helical span at residues 277 to 297; the sequence is VVVLGVCILLLLGGLLYSIKA.

Belongs to the avfA family.

It is found in the membrane. The protein operates within mycotoxin biosynthesis; sterigmatocystin biosynthesis. Functionally, averufin oxidase; part of the gene cluster that mediates the biosynthesis of sterigmatocystin (ST), a polyketide-derived furanocoumarin which is part of the most toxic and carcinogenic compounds among the known mycotoxins. The first step in the biosynthesis of sterigmatocystin is the production of hexanoate by the fatty acid synthase (FAS) units stcJ and stcK. The polyketide backbone is assembled by the non-reducing polyketide synthase stcA by condensation of the starter hexanoyl-CoA and 7 malonyl-CoA extender units followed by cyclization and release of norsolorinic acid. Norsolorinic acid is the first stable intermediate in the biosynthesis of sterigmatocystin and is converted into averantin (AVN) by the ketoreductase stcE which reduces the hexanoate ketone to an alcohol. Averantin is then oxidized into 5'-hydroxyaverantin (HAVN) by the cytochrome P450 monooxygenase stcF. 5'-hydroxyaverantin is further converted to 5'-oxyaverantin (OAVN) by the 5'-hydroxyaverantin dehydrogenase stcG. The next step is the conversion of OAVN into averufin (AVF) which is catalyzed by a yet to be identified enzyme. The cytochrome P450 monooxygenase stcB and the flavin-binding monooxygenase stcW are both required for the conversion of averufin to 1-hydroxyversicolorone. The esterase stcI probably catalyzes the formation of versiconal hemiacetal acetate from 1-hydroxyversicolorone. The oxydoreductase stcN then probably catalyzes the biosynthetic step from versiconal to versicolorin B (VERB). The next step is performed by the versicolorin B desaturase stcL to produce versicolorin A (VERA). The ketoreductase stcU and the cytochrome P450 monooxygenase stcS are involved in the conversion of versicolorin A to demethylsterigmatocystin. The Baeyer-Villiger oxidas stcQ and the reductase stcR might be involved in the biosynthetic step from versicolorin A to demethylsterigmatocystin. The final step in the biosynthesis of sterigmatocystin is the methylation of demethylsterigmatocystin catalyzed by the methyltransferase stcP. The polypeptide is Averufin oxidase stcO (Emericella nidulans (strain FGSC A4 / ATCC 38163 / CBS 112.46 / NRRL 194 / M139) (Aspergillus nidulans)).